Here is a 209-residue protein sequence, read N- to C-terminus: Ribosomal RNA large subunit methyltransferase E (209 aa).

S-adenosyl-L-methionine-binding residues include Gly63, Trp65, Asp83, Asp99, and Asp124. The active-site Proton acceptor is Lys164.

It belongs to the class I-like SAM-binding methyltransferase superfamily. RNA methyltransferase RlmE family.

It is found in the cytoplasm. The catalysed reaction is uridine(2552) in 23S rRNA + S-adenosyl-L-methionine = 2'-O-methyluridine(2552) in 23S rRNA + S-adenosyl-L-homocysteine + H(+). Its function is as follows. Specifically methylates the uridine in position 2552 of 23S rRNA at the 2'-O position of the ribose in the fully assembled 50S ribosomal subunit. In Vibrio parahaemolyticus serotype O3:K6 (strain RIMD 2210633), this protein is Ribosomal RNA large subunit methyltransferase E.